The sequence spans 635 residues: MAGUK p55 subfamily member 4 (635 aa).

Positions Met1–Ala16 are enriched in basic and acidic residues. Residues Met1–Pro23 form a disordered region. 2 consecutive L27 domains span residues Pro23–Leu79 and Ala86–Leu136. The region spanning Ile153–Ser234 is the PDZ domain. The SH3 domain maps to Gln241 to Gln311. In terms of domain architecture, Guanylate kinase-like spans His426 to Gln615. A coiled-coil region spans residues Val567 to Gln622.

This sequence belongs to the MAGUK family. As to quaternary structure, may interact with GRIA2. Interacts with MPDZ. Forms a complex with CRB1 and PALS1. Interacts with FASLG. Detected in the retina (at protein level). Highly enriched in the retina where it is mainly expressed by rod photoreceptors; detected in the inner segment of the photoreceptor layer and in the outer nuclear layer. Also detected at much lower levels in pineal gland, cerebellum, cortex, hippocampus, olfactory bulb, heart, liver and spleen. Expressed in the CA1-CA3 regions of pyramidal cell layers and in the granule cell layer of dentate gyrus in the hippocampus. In the cerebellum, expressed in Purkinje cells and throughout the granule cell layer. In the olfactory bulb, expressed in mitral cells.

The protein localises to the cytoplasm. Its function is as follows. May play a role in retinal photoreceptors development. The sequence is that of MAGUK p55 subfamily member 4 (Mpp4) from Mus musculus (Mouse).